The primary structure comprises 386 residues: Succinate--CoA ligase [ADP-forming] subunit beta (386 aa).

The region spanning 9-244 is the ATP-grasp domain; sequence KELLKQFGVP…LDEEDPAEIE (236 aa). Residues lysine 46, 53 to 55, glutamate 99, alanine 102, and glutamate 107 each bind ATP; that span reads GRG. Residues asparagine 199 and aspartate 213 each coordinate Mg(2+). Substrate is bound by residues asparagine 264 and 321–323; that span reads GIM.

It belongs to the succinate/malate CoA ligase beta subunit family. As to quaternary structure, heterotetramer of two alpha and two beta subunits. It depends on Mg(2+) as a cofactor.

The enzyme catalyses succinate + ATP + CoA = succinyl-CoA + ADP + phosphate. The catalysed reaction is GTP + succinate + CoA = succinyl-CoA + GDP + phosphate. The protein operates within carbohydrate metabolism; tricarboxylic acid cycle; succinate from succinyl-CoA (ligase route): step 1/1. Succinyl-CoA synthetase functions in the citric acid cycle (TCA), coupling the hydrolysis of succinyl-CoA to the synthesis of either ATP or GTP and thus represents the only step of substrate-level phosphorylation in the TCA. The beta subunit provides nucleotide specificity of the enzyme and binds the substrate succinate, while the binding sites for coenzyme A and phosphate are found in the alpha subunit. The chain is Succinate--CoA ligase [ADP-forming] subunit beta from Bordetella petrii (strain ATCC BAA-461 / DSM 12804 / CCUG 43448).